The chain runs to 315 residues: Tyrosine recombinase XerC (315 aa).

The Core-binding (CB) domain occupies 13 to 104 (ADLAAAREEW…GVRSLLRHLE (92 aa)). Residues 125–309 (SLPKPLTADD…DTQRLLEVYD (185 aa)) enclose the Tyr recombinase domain. Residues Arg-168, Lys-193, His-261, Arg-264, and His-287 contribute to the active site. Catalysis depends on Tyr-296, which acts as the O-(3'-phospho-DNA)-tyrosine intermediate.

Belongs to the 'phage' integrase family. XerC subfamily. In terms of assembly, forms a cyclic heterotetrameric complex composed of two molecules of XerC and two molecules of XerD.

It is found in the cytoplasm. Functionally, site-specific tyrosine recombinase, which acts by catalyzing the cutting and rejoining of the recombining DNA molecules. The XerC-XerD complex is essential to convert dimers of the bacterial chromosome into monomers to permit their segregation at cell division. It also contributes to the segregational stability of plasmids. This is Tyrosine recombinase XerC from Brucella melitensis biotype 1 (strain ATCC 23456 / CCUG 17765 / NCTC 10094 / 16M).